We begin with the raw amino-acid sequence, 62 residues long: Phycobilisome degradation protein NblA homolog 1 (62 aa).

To Synechococcus PCC 7942 NblA and some, to chloroplast ycf18.

The chain is Phycobilisome degradation protein NblA homolog 1 from Synechocystis sp. (strain ATCC 27184 / PCC 6803 / Kazusa).